Here is a 221-residue protein sequence, read N- to C-terminus: Protein-disulfide oxidoreductase DsbI (221 aa).

Residues Phe-27–Phe-47 traverse the membrane as a helical segment. Cys-56 and Cys-59 are joined by a disulfide. The next 2 membrane-spanning stretches (helical) occupy residues Phe-64–Ile-84 and Leu-85–Val-105. Cys-128 and Cys-154 are joined by a disulfide. A helical transmembrane segment spans residues Leu-189–Val-209.

The protein belongs to the DsbB family. DsbI subfamily. As to quaternary structure, interacts with DsbL.

Its subcellular location is the cell inner membrane. Functionally, required for disulfide bond formation in some proteins. Part of a redox system composed of DsbI and DsbL that mediates formation of an essential disulfide bond in AssT. The protein is Protein-disulfide oxidoreductase DsbI of Lelliottia amnigena (Enterobacter amnigenus).